We begin with the raw amino-acid sequence, 366 residues long: MRVDLFDFDLPEENIALRPANPRDSARLLVVDPNENRMEDHRVFDLPSFLRPGDALVFNDTRVIPAQLEGVRLREGAPETAVSATLHMRADQSRWKAFARPGKRIKEGDRIRFGYDRDTVNSSSGACGLAHLEATVEEKGEEGEITLLFDISGPVLDEAIASVGHIPLPPYIAAKRPEDQQDQTDYQTIYAREKGAVAAPTAGLHFTPDLFEALDSAGIERHFVTLHVGAGTFLPVKSDDTDDHKMHFEIGYVSQETADRLNAVKARGGRIVCVGTTSLRLIESAATEDGTIHPWSDATGIFITPGYRFRAVDMLMTNFHLPKSTLFMLVSAFCGLETMRDAYRHAIETGYRFYSYGDSSLLFRKN.

It belongs to the QueA family. Monomer.

It is found in the cytoplasm. It carries out the reaction 7-aminomethyl-7-carbaguanosine(34) in tRNA + S-adenosyl-L-methionine = epoxyqueuosine(34) in tRNA + adenine + L-methionine + 2 H(+). It participates in tRNA modification; tRNA-queuosine biosynthesis. Transfers and isomerizes the ribose moiety from AdoMet to the 7-aminomethyl group of 7-deazaguanine (preQ1-tRNA) to give epoxyqueuosine (oQ-tRNA). The protein is S-adenosylmethionine:tRNA ribosyltransferase-isomerase of Agrobacterium fabrum (strain C58 / ATCC 33970) (Agrobacterium tumefaciens (strain C58)).